Here is a 1685-residue protein sequence, read N- to C-terminus: Collagen alpha-5(IV) chain (1685 aa).

The signal sequence occupies residues 1–26 (MKLRGVSLAAGLFLLALSLWGQPAEA). The interval 27-41 (AACYGCSPGSKCDCS) is nonhelical region (NC2). The segment at 42–1456 (GIKGEKGERG…QGPPGPPGTS (1415 aa)) is triple-helical region. A disordered region spans residues 49 to 1459 (ERGFPGLEGH…PGPPGTSSVA (1411 aa)). Residues 52–61 (FPGLEGHPGL) show a composition bias toward low complexity. Residues 62-73 (PGFPGPEGPPGP) show a composition bias toward pro residues. N-linked (GlcNAc...) asparagine glycosylation is present at asparagine 125. A compositionally biased stretch (pro residues) spans 188–212 (TGIPGPIGPPGPPGLMGPPGPPGLP). A compositionally biased stretch (low complexity) spans 214 to 225 (PKGNMGLNFQGP). Residues 246–257 (EQKRPIDVEFQK) show a composition bias toward basic and acidic residues. The segment covering 266–281 (RGPPGPPGIRGPPGPP) has biased composition (pro residues). 2 stretches are compositionally biased toward basic and acidic residues: residues 284-305 (EKGEKGEQGEPGKRGKPGKDGE) and 324-333 (PGRDGEKGQK). Residues 413–430 (PPGISIPGPPGLDGQPGA) are compositionally biased toward low complexity. Composition is skewed to pro residues over residues 431–445 (PGLPGPPGPAGPHIP), 493–505 (PGQPGLPGLPGPP), 620–630 (MGPPGFGPPGP), and 709–727 (PGPPGPKGFPGIPGPPGAP). Over residues 788–797 (RTGLDGLPGP) the composition is skewed to low complexity. Pro residues-rich tracts occupy residues 848–859 (PGPPGLDVPGPP) and 868–880 (PGAPGPIGPPGSP). Low complexity-rich tracts occupy residues 882 to 901 (LPGKAGASGFPGTKGEMGMM), 912 to 931 (IPGRSGVPGLKGDDGLQGQP), 983 to 999 (YQGLPGDPGQPGLSGQP), 1010 to 1026 (NPGLPGQPGLIGPPGLK), and 1111 to 1120 (TPGAKGQPGL). Positions 1139-1148 (PGNPGLPGEP) are enriched in pro residues. Gly residues-rich tracts occupy residues 1149-1158 (GPVGGGGHPG) and 1202-1211 (GQKGDGGLPG). Composition is skewed to pro residues over residues 1234-1243 (QGPPGPPGSP) and 1256-1274 (PQGPPGRPGLPGPEGPPGL). The span at 1295–1308 (LPGLKGDQGPPGLQ) shows a compositional bias: low complexity. Pro residues predominate over residues 1353-1362 (IGPPGPPGLP). One can recognise a Collagen IV NC1 domain in the interval 1461-1685 (GFLITRHSQT…SRCQVCMKRT (225 aa)). 6 disulfide bridges follow: cysteine 1476–cysteine 1567, cysteine 1509–cysteine 1564, cysteine 1521–cysteine 1527, cysteine 1586–cysteine 1681, cysteine 1620–cysteine 1678, and cysteine 1632–cysteine 1638. An S-Lysyl-methionine sulfilimine (Met-Lys) (interchain with K-1667) cross-link involves residue methionine 1549. Residue lysine 1667 forms an S-Lysyl-methionine sulfilimine (Lys-Met) (interchain with M-1549) linkage.

It belongs to the type IV collagen family. There are six type IV collagen isoforms, alpha 1(IV)-alpha 6(IV), each of which can form a triple helix structure with 2 other chains to generate type IV collagen network. Prolines at the third position of the tripeptide repeating unit (G-X-Y) are hydroxylated in some or all of the chains. In terms of processing, type IV collagens contain numerous cysteine residues which are involved in inter- and intramolecular disulfide bonding. 12 of these, located in the NC1 domain, are conserved in all known type IV collagens. Post-translationally, the trimeric structure of the NC1 domains is stabilized by covalent bonds between Lys and Met residues. Isoform 2 is found in kidney.

It is found in the secreted. The protein resides in the extracellular space. It localises to the extracellular matrix. The protein localises to the basement membrane. Type IV collagen is the major structural component of glomerular basement membranes (GBM), forming a 'chicken-wire' meshwork together with laminins, proteoglycans and entactin/nidogen. This is Collagen alpha-5(IV) chain (COL4A5) from Homo sapiens (Human).